Reading from the N-terminus, the 404-residue chain is Cysteine desulfurase IscS (404 aa).

Residues 75-76 (AT), Asn155, Gln183, and 203-205 (SAH) contribute to the pyridoxal 5'-phosphate site. Residue Lys206 is modified to N6-(pyridoxal phosphate)lysine. Thr243 is a binding site for pyridoxal 5'-phosphate. Cys328 functions as the Cysteine persulfide intermediate in the catalytic mechanism. Cys328 serves as a coordination point for [2Fe-2S] cluster.

Belongs to the class-V pyridoxal-phosphate-dependent aminotransferase family. NifS/IscS subfamily. In terms of assembly, homodimer. Forms a heterotetramer with IscU, interacts with other sulfur acceptors. Requires pyridoxal 5'-phosphate as cofactor.

The protein resides in the cytoplasm. It carries out the reaction (sulfur carrier)-H + L-cysteine = (sulfur carrier)-SH + L-alanine. It functions in the pathway cofactor biosynthesis; iron-sulfur cluster biosynthesis. In terms of biological role, master enzyme that delivers sulfur to a number of partners involved in Fe-S cluster assembly, tRNA modification or cofactor biosynthesis. Catalyzes the removal of elemental sulfur atoms from cysteine to produce alanine. Functions as a sulfur delivery protein for Fe-S cluster synthesis onto IscU, an Fe-S scaffold assembly protein, as well as other S acceptor proteins. This is Cysteine desulfurase IscS from Pseudomonas syringae pv. syringae (strain B728a).